A 147-amino-acid chain; its full sequence is MKLFELQPAPGSKKLPNRKGRGIGSGNGKTGGRGHKGQNARAGGGVRPGFEGGQMPLYMRLPKRGFNNYEFSKKYTEVNVSDLNIFDEGTVVTEELLKSSGLAKKIIDGVAILGNGELTKKLTVQATKFTKTATEKIEAAGGKVEVV.

The interval 1–54 (MKLFELQPAPGSKKLPNRKGRGIGSGNGKTGGRGHKGQNARAGGGVRPGFEGGQ) is disordered. 2 stretches are compositionally biased toward gly residues: residues 22–31 (GIGSGNGKTG) and 42–52 (AGGGVRPGFEG).

It belongs to the universal ribosomal protein uL15 family. Part of the 50S ribosomal subunit.

In terms of biological role, binds to the 23S rRNA. In Ruminiclostridium cellulolyticum (strain ATCC 35319 / DSM 5812 / JCM 6584 / H10) (Clostridium cellulolyticum), this protein is Large ribosomal subunit protein uL15.